A 338-amino-acid polypeptide reads, in one-letter code: High mobility group B protein 9 (338 aa).

The region spanning 38 to 129 (VKDSSVFWDT…LLFHYEQVHL (92 aa)) is the ARID domain. A disordered region spans residues 233–259 (TGRRRRRLGKRRRSRRREDPNYPKPNR). The span at 235-247 (RRRRRLGKRRRSR) shows a compositional bias: basic residues. Positions 255-322 (PKPNRSGYNF…RYQRELNEYR (68 aa)) form a DNA-binding region, HMG box.

Predominantly expressed in leaves, flowers and seedlings.

It is found in the nucleus. Functionally, binds preferentially DNA with A/T-rich content. Required for karyogamy during female gametophyte development, when the two polar nuclei fuse to form the diploid central cell nucleus. This is High mobility group B protein 9 (HMGB9) from Arabidopsis thaliana (Mouse-ear cress).